Here is a 141-residue protein sequence, read N- to C-terminus: MLQPKRTKYRKVQKGKMKGNSQRGHELSNGMFGIKSVHEDGMFLTSRQIEAARIAATRFMKREGQLWIKIFPDKPITKKPLEVRMGKGKGAVEYWAAVVKPGRIMFEVGGVPLSVAKEALRLAAQKLPCKTKFVVARDFEA.

Over residues 1-17 the composition is skewed to basic residues; it reads MLQPKRTKYRKVQKGKM. Positions 1–29 are disordered; the sequence is MLQPKRTKYRKVQKGKMKGNSQRGHELSN.

The protein belongs to the universal ribosomal protein uL16 family. As to quaternary structure, part of the 50S ribosomal subunit.

Binds 23S rRNA and is also seen to make contacts with the A and possibly P site tRNAs. In Flavobacterium psychrophilum (strain ATCC 49511 / DSM 21280 / CIP 103535 / JIP02/86), this protein is Large ribosomal subunit protein uL16.